Here is a 127-residue protein sequence, read N- to C-terminus: UPF0102 protein SYNAS_23220 (127 aa).

This sequence belongs to the UPF0102 family.

This is UPF0102 protein SYNAS_23220 from Syntrophus aciditrophicus (strain SB).